Here is a 208-residue protein sequence, read N- to C-terminus: Methylthioribulose-1-phosphate dehydratase (208 aa).

Residues histidine 96 and histidine 98 each contribute to the Zn(2+) site.

Belongs to the aldolase class II family. MtnB subfamily. The cofactor is Zn(2+).

It carries out the reaction 5-(methylsulfanyl)-D-ribulose 1-phosphate = 5-methylsulfanyl-2,3-dioxopentyl phosphate + H2O. It functions in the pathway amino-acid biosynthesis; L-methionine biosynthesis via salvage pathway; L-methionine from S-methyl-5-thio-alpha-D-ribose 1-phosphate: step 2/6. Functionally, catalyzes the dehydration of methylthioribulose-1-phosphate (MTRu-1-P) into 2,3-diketo-5-methylthiopentyl-1-phosphate (DK-MTP-1-P). This is Methylthioribulose-1-phosphate dehydratase from Pseudomonas fluorescens (strain Pf0-1).